The following is a 62-amino-acid chain: UPF0291 protein CLJ_B2839 (62 aa).

Belongs to the UPF0291 family.

The protein localises to the cytoplasm. This chain is UPF0291 protein CLJ_B2839, found in Clostridium botulinum (strain 657 / Type Ba4).